Consider the following 303-residue polypeptide: Probable 5-dehydro-4-deoxyglucarate dehydratase (303 aa).

Belongs to the DapA family.

It carries out the reaction 5-dehydro-4-deoxy-D-glucarate + H(+) = 2,5-dioxopentanoate + CO2 + H2O. It functions in the pathway carbohydrate acid metabolism; D-glucarate degradation; 2,5-dioxopentanoate from D-glucarate: step 2/2. This chain is Probable 5-dehydro-4-deoxyglucarate dehydratase, found in Agrobacterium fabrum (strain C58 / ATCC 33970) (Agrobacterium tumefaciens (strain C58)).